The sequence spans 231 residues: LexA repressor (231 aa).

The H-T-H motif DNA-binding region spans 26–46; the sequence is FDEMKDALDLRSKSGIHRLIT. Active-site for autocatalytic cleavage activity residues include S152 and K190.

This sequence belongs to the peptidase S24 family. In terms of assembly, homodimer.

The enzyme catalyses Hydrolysis of Ala-|-Gly bond in repressor LexA.. Represses a number of genes involved in the response to DNA damage (SOS response), including recA and lexA. In the presence of single-stranded DNA, RecA interacts with LexA causing an autocatalytic cleavage which disrupts the DNA-binding part of LexA, leading to derepression of the SOS regulon and eventually DNA repair. This is LexA repressor from Bradyrhizobium diazoefficiens (strain JCM 10833 / BCRC 13528 / IAM 13628 / NBRC 14792 / USDA 110).